Reading from the N-terminus, the 311-residue chain is Malate dehydrogenase (311 aa).

NAD(+) is bound by residues 10–15 (GAGRVG) and D35. Substrate-binding residues include R84 and R90. NAD(+)-binding positions include N97 and 120-122 (VTN). Positions 122 and 153 each coordinate substrate. The active-site Proton acceptor is H177.

Belongs to the LDH/MDH superfamily. MDH type 3 family.

It carries out the reaction (S)-malate + NAD(+) = oxaloacetate + NADH + H(+). In terms of biological role, catalyzes the reversible oxidation of malate to oxaloacetate. The protein is Malate dehydrogenase of Nitrosococcus oceani (strain ATCC 19707 / BCRC 17464 / JCM 30415 / NCIMB 11848 / C-107).